The chain runs to 141 residues: HTH-type transcriptional repressor NsrR (141 aa).

The 128-residue stretch at 2–129 (QLTSFTDYGL…DNYTLADLVE (128 aa)) folds into the HTH rrf2-type domain. A DNA-binding region (H-T-H motif) is located at residues 28-51 (ISEVTDVYGVSRNHMVKIINQLSR). 3 residues coordinate [2Fe-2S] cluster: Cys91, Cys96, and Cys102.

[2Fe-2S] cluster is required as a cofactor.

Nitric oxide-sensitive repressor of genes involved in protecting the cell against nitrosative stress. May require iron for activity. The protein is HTH-type transcriptional repressor NsrR of Escherichia fergusonii (strain ATCC 35469 / DSM 13698 / CCUG 18766 / IAM 14443 / JCM 21226 / LMG 7866 / NBRC 102419 / NCTC 12128 / CDC 0568-73).